Reading from the N-terminus, the 361-residue chain is Mitogen-activated protein kinase 14B (361 aa).

The region spanning 25 to 309 is the Protein kinase domain; the sequence is YQNLSPVGSG…ASQALAHPYF (285 aa). Residues 31 to 39 and Lys-54 each bind ATP; that span reads VGSGAYGSV. Catalysis depends on Asp-151, which acts as the Proton acceptor. Residue Thr-181 is modified to Phosphothreonine; by MAP2K6. Positions 181-183 match the TXY motif; the sequence is TGY. Phosphotyrosine; by MAP2K6 is present on Tyr-183.

This sequence belongs to the protein kinase superfamily. CMGC Ser/Thr protein kinase family. MAP kinase subfamily. Mg(2+) is required as a cofactor. In terms of processing, dually phosphorylated on Thr-181 and Tyr-183, which activates the enzyme. In terms of tissue distribution, predominantly expressed in the ovary. Lower levels present in brain, gill, heart, spleen, kidney, muscle and gut.

It localises to the cytoplasm. The protein resides in the nucleus. It catalyses the reaction L-seryl-[protein] + ATP = O-phospho-L-seryl-[protein] + ADP + H(+). It carries out the reaction L-threonyl-[protein] + ATP = O-phospho-L-threonyl-[protein] + ADP + H(+). Activated by threonine and tyrosine phosphorylation by the dual specificity kinase, MKK6. In terms of biological role, serine/threonine kinase which acts as an essential component of the MAP kinase signal transduction pathway. Mapk14b is one of the four p38 MAPKs which play an important role in the cascades of cellular responses evoked by extracellular stimuli such as pro-inflammatory cytokines or physical stress leading to direct activation of transcription factors. Accordingly, p38 MAPKs phosphorylate a broad range of proteins and it has been estimated that they may have approximately 200 to 300 substrates each. Some of the targets are downstream kinases which are activated through phosphorylation and further phosphorylate additional targets. The polypeptide is Mitogen-activated protein kinase 14B (mapk14b) (Cyprinus carpio (Common carp)).